Reading from the N-terminus, the 433-residue chain is N-lysine methyltransferase SMYD2 (433 aa).

An SET domain is found at 7–241 (GGLERFCSPG…PGEEVFTSYI (235 aa)). 17–19 (KGR) contacts S-adenosyl-L-methionine. Cys52, Cys55, Cys65, Cys68, Cys74, Cys78, His86, and Cys90 together coordinate Zn(2+). The MYND-type zinc-finger motif lies at 52-90 (CEYCFTRKEGLSKCGRCKQAFYCNVECQKEDWPMHKLEC). S-adenosyl-L-methionine is bound by residues His137, 206–207 (NH), and 258–260 (YFF). Position 283 is a phosphoserine (Ser283).

It belongs to the class V-like SAM-binding methyltransferase superfamily. As to quaternary structure, interacts with RNA polymerase II and HELZ. Interacts with SIN3A and HDAC1. Interacts (via MYND-type zinc finger) with EPB41L3. Interacts (via SET domain) with p53/TP53. Interacts with RB1 and HSP90AA1.

The protein resides in the cytoplasm. The protein localises to the cytosol. It is found in the nucleus. It carries out the reaction L-lysyl(4)-[histone H3] + 3 S-adenosyl-L-methionine = N(6),N(6),N(6)-trimethyl-L-lysyl(4)-[histone H3] + 3 S-adenosyl-L-homocysteine + 3 H(+). The catalysed reaction is L-lysyl-[protein] + S-adenosyl-L-methionine = N(6)-methyl-L-lysyl-[protein] + S-adenosyl-L-homocysteine + H(+). In terms of biological role, protein-lysine N-methyltransferase that methylates both histones and non-histone proteins, including p53/TP53 and RB1. Specifically trimethylates histone H3 'Lys-4' (H3K4me3) in vivo. The activity requires interaction with HSP90alpha. Shows even higher methyltransferase activity on p53/TP53. Monomethylates 'Lys-370' of p53/TP53, leading to decreased DNA-binding activity and subsequent transcriptional regulation activity of p53/TP53. Monomethylates RB1 at 'Lys-860'. In Homo sapiens (Human), this protein is N-lysine methyltransferase SMYD2 (SMYD2).